The sequence spans 142 residues: Crustacean hyperglycemic hormones (142 aa).

Positions 1–26 are cleaved as a signal peptide; the sequence is MYSKTIPAMLAIITVAYLCALPHAHA. Gln-67 carries the pyrrolidone carboxylic acid; partial modification. 3 disulfides stabilise this stretch: Cys-73/Cys-109, Cys-89/Cys-105, and Cys-92/Cys-118. Valine amide is present on Val-138.

This sequence belongs to the arthropod CHH/MIH/GIH/VIH hormone family. In terms of processing, the N-terminus is blocked only in isoform CHH-II but not in isoform CHH-I. As to expression, produced by the medulla terminalis X-organ in the eyestalks and transported to the sinus gland where they are stored and released.

It is found in the secreted. Functionally, hormone found in the sinus gland of isopods and decapods which controls the blood sugar level. Has a secretagogue action over the amylase released from the midgut gland. May act as a stress hormone and may be involved in the control of molting and reproduction. The chain is Crustacean hyperglycemic hormones from Carcinus maenas (Common shore crab).